Reading from the N-terminus, the 568-residue chain is Involucrin (568 aa).

Disordered regions lie at residues 23–499 and 517–568; these read CSPA…EKEL and RKKH…HEVQ. Low complexity predominate over residues 25–36; that stretch reads PAQTQQEQTKQP. A compositionally biased stretch (basic and acidic residues) spans 49-77; sequence TQEKGFPKHEEKEANPVKDLPEQESEHHQ. Residues 78–88 show a composition bias toward low complexity; it reads QPGPQKQQLQV. A compositionally biased stretch (basic and acidic residues) spans 89–106; the sequence is KKPEQELQEQELHSEKQP. Low complexity-rich tracts occupy residues 107-121, 133-154, and 172-181; these read QEPQGLLCLGQQQQR, HQQPQQESQGQGLCLGQQQDVL, and PELPLGQQQK. A compositionally biased stretch (basic and acidic residues) spans 193–213; sequence KQQKLHLVERHQEPQEQELHH. Low complexity predominate over residues 217-232; the sequence is QKQQQPQEQELQLVQH. 2 stretches are compositionally biased toward basic and acidic residues: residues 266–333 and 345–456; these read ESHE…HQET and KPHE…HLGK. Residues 457 to 467 show a composition bias toward low complexity; the sequence is QQEQQIEYEGY. Ser472 bears the Phosphoserine mark. 3 stretches are compositionally biased toward basic and acidic residues: residues 478–499, 517–532, and 551–568; these read KQEKASRGQELDDSHLEQEKEL, RKKHKLENLTQKEKQI, and VKEDSLTTKKQQHSHEVQ.

The protein belongs to the involucrin family. In terms of assembly, directly or indirectly cross-linked to cornifelin (CNFN). In terms of processing, substrate of transglutaminase. Specific glutamines or lysines are cross-linked to keratins, desmoplakin and to inter involucrin molecules. Keratinocytes of epidermis and other stratified squamous epithelia.

Its subcellular location is the cytoplasm. Part of the insoluble cornified cell envelope (CE) of stratified squamous epithelia. The protein is Involucrin (Ivl) of Rattus norvegicus (Rat).